We begin with the raw amino-acid sequence, 505 residues long: MDLLLLEKTLLALFIAATIAITISKLRGKRFKLPPGPIPVPVFGNWLQVGDDLNHRNLTDLAKRFGDIFLLRMGQRNLVVVSSPELAKEVLHTQGVEFGSRTRNVVFDIFTGKGQDMVFTVYGTLAEMRRIMTVPFFTNKVVQQYRFGWEFEAQSVVDDVKKNPEACSSGIVLRRRLQLMMYNIMYRIMFDRRFESEEDPLFVKLKALNGERSRLAQSFEYNYGDFIPILRPFLKGYLKLCKEVKDRRLQLFKDYFVDERKKLGSTKSTTNEGLKCAIDHILDAQQKGEINDDNVLYIVENINVAAIETTLWSIEWGIAELVNHQKIQNKVREEIDRVLGPGHQVTEPDLQKLPYLQAVIKETLRLRMAIPLLVPHMNLHDAKLSGFDIPAESKILVNAWWLANNPAQWKKPEEFRPERFLEEESHVEANGNDFRYLPFGVGRRSCPGIILALPILGITLGRLVQNFELLPPPGQSKIDTAEKGGQFSLHILKHSTIVCKPRSFN.

The helical transmembrane segment at 3–23 threads the bilayer; the sequence is LLLLEKTLLALFIAATIAITI. (E)-cinnamate contacts are provided by residues 212–217 and A305; that span reads RSRLAQ. A heme-binding site is contributed by C446.

The protein belongs to the cytochrome P450 family. The cofactor is heme.

It is found in the membrane. It catalyses the reaction (E)-cinnamate + reduced [NADPH--hemoprotein reductase] + O2 = (E)-4-coumarate + oxidized [NADPH--hemoprotein reductase] + H2O + H(+). The protein operates within phenylpropanoid metabolism; trans-4-coumarate biosynthesis; trans-4-coumarate from trans-cinnamate: step 1/1. Catalyzes the first oxidative step of the phenylpropanoid pathway in higher plants by transforming trans-cinnamate into p-coumarate. The compounds formed by this pathway are essential components for lignification, pollination, and defense against ultraviolet light, predators and pathogens. The polypeptide is Trans-cinnamate 4-monooxygenase (CYP73A19) (Cicer arietinum (Chickpea)).